The primary structure comprises 278 residues: Large ribosomal subunit protein uL2 (278 aa).

Disordered stretches follow at residues 28–58 (TPEK…GGGH) and 223–278 (GVVM…KNKR). Over residues 43-53 (RNNQGRITTRH) the composition is skewed to polar residues. Basic residues predominate over residues 268-278 (IRRRKTGKNKR).

It belongs to the universal ribosomal protein uL2 family. As to quaternary structure, part of the 50S ribosomal subunit. Forms a bridge to the 30S subunit in the 70S ribosome.

In terms of biological role, one of the primary rRNA binding proteins. Required for association of the 30S and 50S subunits to form the 70S ribosome, for tRNA binding and peptide bond formation. It has been suggested to have peptidyltransferase activity; this is somewhat controversial. Makes several contacts with the 16S rRNA in the 70S ribosome. This chain is Large ribosomal subunit protein uL2, found in Nocardioides sp. (strain ATCC BAA-499 / JS614).